Consider the following 199-residue polypeptide: Holliday junction branch migration complex subunit RuvA (199 aa).

The segment at Met1–Arg64 is domain I. The domain II stretch occupies residues Thr65–Glu143. Positions Ala144–Ala154 are flexible linker. The segment at Ala154–Lys199 is domain III.

Belongs to the RuvA family. As to quaternary structure, homotetramer. Forms an RuvA(8)-RuvB(12)-Holliday junction (HJ) complex. HJ DNA is sandwiched between 2 RuvA tetramers; dsDNA enters through RuvA and exits via RuvB. An RuvB hexamer assembles on each DNA strand where it exits the tetramer. Each RuvB hexamer is contacted by two RuvA subunits (via domain III) on 2 adjacent RuvB subunits; this complex drives branch migration. In the full resolvosome a probable DNA-RuvA(4)-RuvB(12)-RuvC(2) complex forms which resolves the HJ.

Its subcellular location is the cytoplasm. Functionally, the RuvA-RuvB-RuvC complex processes Holliday junction (HJ) DNA during genetic recombination and DNA repair, while the RuvA-RuvB complex plays an important role in the rescue of blocked DNA replication forks via replication fork reversal (RFR). RuvA specifically binds to HJ cruciform DNA, conferring on it an open structure. The RuvB hexamer acts as an ATP-dependent pump, pulling dsDNA into and through the RuvAB complex. HJ branch migration allows RuvC to scan DNA until it finds its consensus sequence, where it cleaves and resolves the cruciform DNA. In Geobacter sulfurreducens (strain ATCC 51573 / DSM 12127 / PCA), this protein is Holliday junction branch migration complex subunit RuvA.